A 296-amino-acid polypeptide reads, in one-letter code: Probable AP endonuclease (296 aa).

C16 and C20 are joined by a disulfide. Residues H78, H115, E142, H182, H218, D231, H233, and E271 each coordinate Zn(2+).

This sequence belongs to the AP endonuclease 2 family. Zn(2+) is required as a cofactor.

The protein localises to the host nucleus. The protein resides in the host cytoplasm. It localises to the virion. Functionally, endonuclease of the viral base excision repair system that catalyzes DNA cleavage reaction at the apurinic or apyrimidinic sites (AP sites). Cleaves phosphodiester bonds on the 5' side of AP sites. In addition to endonuclease activity, the AP endonuclease has a proofreading 3'-5' exonuclease activity that is considerably more efficient in the elimination of a mismatch than in that of a correctly paired base. Displays 3'-phosphatase and 3'-repair diesterase activities. The single nucleotide gaps generated by the AP endonuclease are filled by the viral repair DNA polymerase X and the DNA ligase. This is Probable AP endonuclease from Ornithodoros (relapsing fever ticks).